Here is a 73-residue protein sequence, read N- to C-terminus: Venom peptide La1 (73 aa).

Lys73 carries the post-translational modification Lysine amide.

It belongs to the scorpion La1-like peptide family. Post-translationally, contains 4 disulfide bonds. In terms of tissue distribution, expressed by the venom gland.

Its subcellular location is the secreted. Its function is as follows. Not toxic to insect. This Liocheles australasiae (Dwarf wood scorpion) protein is Venom peptide La1.